A 423-amino-acid polypeptide reads, in one-letter code: Endochitinase 42 (423 aa).

The first 22 residues, M1–P22, serve as a signal peptide directing secretion. Residues K23–R34 constitute a propeptide that is removed on maturation. Residues Y38 to L401 form the GH18 domain. Chitin-binding positions include G102–T103 and G129–T132. E171 (proton donor) is an active-site residue. A chitin-binding site is contributed by Y172. N-linked (GlcNAc...) asparagine glycosylation occurs at N218. Chitin-binding positions include M237–D240 and W378.

This sequence belongs to the glycosyl hydrolase 18 family. Chitinase class V subfamily.

The protein resides in the secreted. It catalyses the reaction Random endo-hydrolysis of N-acetyl-beta-D-glucosaminide (1-&gt;4)-beta-linkages in chitin and chitodextrins.. Secreted chitinase involved in the degradation of chitin, a component of the cell walls of fungi and exoskeletal elements of some animals (including worms and arthropods). Plays a morphogenetic role during apical growth, cell division and differentiation (cell wall morphogenesis). Also acts as an antifungal agent. Involved in the degradation and further assimilation of phytopathogenic fungi, namely mycoparasitism, the major mechanism accounting for the antagonistic activity against phytopathogenic fungi displayed by Trichoderma. The chain is Endochitinase 42 (chit42) from Trichoderma harzianum (Hypocrea lixii).